The primary structure comprises 362 residues: Photosystem II protein D1 3 (362 aa).

The next 3 helical transmembrane spans lie at 29–46, 118–133, and 142–156; these read YVGW…SATI, HFLI…EWEL, and WICI…AATA. His-118 lines the chlorophyll a pocket. Tyr-126 provides a ligand contact to pheophytin a. Positions 170 and 189 each coordinate [CaMn4O5] cluster. A helical transmembrane segment spans residues 197–218; sequence FHMLGVAGVFGGALISAMHGSL. His-198 is a binding site for chlorophyll a. Residues His-215 and 264–265 contribute to the a quinone site; that span reads AF. His-215 contacts Fe cation. His-274 lines the Fe cation pocket. Residues 276–290 form a helical membrane-spanning segment; that stretch reads IMAAFPVIGIWFTSL. Positions 334, 335, 344, and 346 each coordinate [CaMn4O5] cluster. The propeptide occupies 347-362; that stretch reads GTESAPVAVSTAKVGG.

This sequence belongs to the reaction center PufL/M/PsbA/D family. In terms of assembly, PSII is composed of 1 copy each of membrane proteins PsbA, PsbB, PsbC, PsbD, PsbE, PsbF, PsbH, PsbI, PsbJ, PsbK, PsbL, PsbM, PsbT, PsbX, Psb30/Ycf12, peripheral proteins PsbO, CyanoQ (PsbQ), PsbU, PsbV and a large number of cofactors. It forms dimeric complexes. The cofactor is The D1/D2 heterodimer binds P680, chlorophylls that are the primary electron donor of PSII, and subsequent electron acceptors. It shares a non-heme iron and each subunit binds pheophytin, quinone, additional chlorophylls, carotenoids and lipids. D1 provides most of the ligands for the Mn4-Ca-O5 cluster of the oxygen-evolving complex (OEC). There is also a Cl(-1) ion associated with D1 and D2, which is required for oxygen evolution. The PSII complex binds additional chlorophylls, carotenoids and specific lipids.. Post-translationally, tyr-161 forms a radical intermediate that is referred to as redox-active TyrZ, YZ or Y-Z. C-terminally processed by CtpA; processing is essential to allow assembly of the oxygen-evolving complex and thus photosynthetic growth.

The protein resides in the cell inner membrane. It carries out the reaction 2 a plastoquinone + 4 hnu + 2 H2O = 2 a plastoquinol + O2. Functionally, photosystem II (PSII) is a light-driven water:plastoquinone oxidoreductase that uses light energy to abstract electrons from H(2)O, generating O(2) and a proton gradient subsequently used for ATP formation. It consists of a core antenna complex that captures photons, and an electron transfer chain that converts photonic excitation into a charge separation. The D1/D2 (PsbA/PsbD) reaction center heterodimer binds P680, the primary electron donor of PSII as well as several subsequent electron acceptors. This chain is Photosystem II protein D1 3, found in Gloeobacter violaceus (strain ATCC 29082 / PCC 7421).